A 452-amino-acid chain; its full sequence is MTTTRFAPSPTGRLHVGNIRTALHNWMLAKKHGGRFLLRIDDTDAERSKEEYVHAIRADLAWLGLEPDGEERQSERLEHYEAAFEALKAAGRVYPAYETAQELELKRKIQLGRGLPPIYDRAALKLSDDERAAKEAQGIAPHWRFKLDHDVPITWEDRVRGPQKFDPAQLSDPVIRRADGSWLYMLPSAVDDIDMGITHVLRGEDHVSNTAVQIQMFTALFAAQHDAQQSPPEFAHEALLVGKEGKLSKRLGSLGCDAFRERGIEPEALVAMLARLGTSQPVEPIADRQVLLDTFDLSTFGRAPAKFDDAELERVNTAIVHAMDFEQVKQRLPEGIDAAGWHAIQPNLATVDEAGEWWRLVTGPIEQPEFSDEDRAYLAEAAETLAWDDDPWGTLTAKLKDSTGRKGKALFLPLRQALTGMNHGPDMGELLPLIGEEEARARLQSAADQRGG.

A 'HIGH' region motif is present at residues 8–18; that stretch reads PSPTGRLHVGN. The short motif at 246-250 is the 'KMSKS' region element; the sequence is KLSKR. Lys-249 is an ATP binding site.

It belongs to the class-I aminoacyl-tRNA synthetase family. Glutamate--tRNA ligase type 1 subfamily. In terms of assembly, monomer.

The protein resides in the cytoplasm. The catalysed reaction is tRNA(Glu) + L-glutamate + ATP = L-glutamyl-tRNA(Glu) + AMP + diphosphate. In terms of biological role, catalyzes the attachment of glutamate to tRNA(Glu) in a two-step reaction: glutamate is first activated by ATP to form Glu-AMP and then transferred to the acceptor end of tRNA(Glu). This chain is Glutamate--tRNA ligase 2, found in Erythrobacter litoralis (strain HTCC2594).